The following is a 205-amino-acid chain: UPF0056 membrane protein MJ1677 (205 aa).

6 consecutive transmembrane segments (helical) span residues 7 to 27 (ILAF…PVFI), 49 to 69 (ALAI…FFGI), 70 to 90 (SLDA…LDMV), 112 to 132 (IALM…TACM), 145 to 165 (FLVI…LLSA), and 185 to 205 (GLIL…GALL).

It belongs to the UPF0056 (MarC) family.

The protein resides in the cell membrane. The chain is UPF0056 membrane protein MJ1677 from Methanocaldococcus jannaschii (strain ATCC 43067 / DSM 2661 / JAL-1 / JCM 10045 / NBRC 100440) (Methanococcus jannaschii).